Consider the following 420-residue polypeptide: Dual-specificity RNA methyltransferase RlmN (420 aa).

Glutamate 115 functions as the Proton acceptor in the catalytic mechanism. The 268-residue stretch at aspartate 121–aspartate 388 folds into the Radical SAM core domain. The cysteines at positions 128 and 393 are disulfide-linked. Residues cysteine 135, cysteine 139, and cysteine 142 each coordinate [4Fe-4S] cluster. S-adenosyl-L-methionine contacts are provided by residues glycine 217–glutamate 218, serine 249, serine 271–histidine 273, and asparagine 350. Cysteine 393 (S-methylcysteine intermediate) is an active-site residue.

It belongs to the radical SAM superfamily. RlmN family. It depends on [4Fe-4S] cluster as a cofactor.

It localises to the cytoplasm. It carries out the reaction adenosine(2503) in 23S rRNA + 2 reduced [2Fe-2S]-[ferredoxin] + 2 S-adenosyl-L-methionine = 2-methyladenosine(2503) in 23S rRNA + 5'-deoxyadenosine + L-methionine + 2 oxidized [2Fe-2S]-[ferredoxin] + S-adenosyl-L-homocysteine. It catalyses the reaction adenosine(37) in tRNA + 2 reduced [2Fe-2S]-[ferredoxin] + 2 S-adenosyl-L-methionine = 2-methyladenosine(37) in tRNA + 5'-deoxyadenosine + L-methionine + 2 oxidized [2Fe-2S]-[ferredoxin] + S-adenosyl-L-homocysteine. Specifically methylates position 2 of adenine 2503 in 23S rRNA and position 2 of adenine 37 in tRNAs. m2A2503 modification seems to play a crucial role in the proofreading step occurring at the peptidyl transferase center and thus would serve to optimize ribosomal fidelity. The polypeptide is Dual-specificity RNA methyltransferase RlmN (Sphingopyxis alaskensis (strain DSM 13593 / LMG 18877 / RB2256) (Sphingomonas alaskensis)).